The following is a 457-amino-acid chain: Protein trichome birefringence-like 4 (457 aa).

A helical; Signal-anchor for type II membrane protein transmembrane segment spans residues 19–37 (IFLTSLFFLSLFLLSSSSL). Residues 173 to 175 (GDS) carry the GDS motif motif. Residues 420–434 (DCSHWCLPGVPDSWN) carry the DCXHWCLPGXXDXWN motif motif.

This sequence belongs to the PC-esterase family. TBL subfamily.

It is found in the membrane. May act as a bridging protein that binds pectin and other cell wall polysaccharides. Probably involved in maintaining esterification of pectins. May be involved in the specific O-acetylation of cell wall polymers. This Arabidopsis thaliana (Mouse-ear cress) protein is Protein trichome birefringence-like 4 (TBL4).